The chain runs to 86 residues: Small ribosomal subunit protein uS17 (86 aa).

Belongs to the universal ribosomal protein uS17 family. As to quaternary structure, part of the 30S ribosomal subunit.

Its function is as follows. One of the primary rRNA binding proteins, it binds specifically to the 5'-end of 16S ribosomal RNA. The protein is Small ribosomal subunit protein uS17 of Nitrosococcus oceani (strain ATCC 19707 / BCRC 17464 / JCM 30415 / NCIMB 11848 / C-107).